A 751-amino-acid polypeptide reads, in one-letter code: Polyribonucleotide nucleotidyltransferase (751 aa).

Residues D528 and D534 each contribute to the Mg(2+) site. The KH domain occupies 594-653 (PRVISVTVPVSKIGEVIGPKGKMINQIQEDTGTDISIEDDGTVYIGATDGPSAEAARSAI). The S1 motif domain occupies 665–737 (GERYLGTVVK…DRGKLSLAPV (73 aa)).

The protein belongs to the polyribonucleotide nucleotidyltransferase family. Mg(2+) is required as a cofactor.

The protein localises to the cytoplasm. It carries out the reaction RNA(n+1) + phosphate = RNA(n) + a ribonucleoside 5'-diphosphate. Involved in mRNA degradation. Catalyzes the phosphorolysis of single-stranded polyribonucleotides processively in the 3'- to 5'-direction. This is Polyribonucleotide nucleotidyltransferase from Kocuria rhizophila (strain ATCC 9341 / DSM 348 / NBRC 103217 / DC2201).